Reading from the N-terminus, the 225-residue chain is Phosphoserine phosphatase (225 aa).

An N-acetylmethionine modification is found at methionine 1. Aspartate 20 functions as the Nucleophile in the catalytic mechanism. Residues aspartate 20 and aspartate 22 each coordinate Mg(2+). Position 20–22 (20–22) interacts with L-serine; that stretch reads DVD. The active-site Proton donor is the aspartate 22. O-phospho-L-serine is bound at residue methionine 52. Position 53 (glycine 53) interacts with phosphate. Residues 109–111 and lysine 158 each bind L-serine; that span reads SGG. Residues 109-111 and lysine 158 contribute to the O-phospho-L-serine site; that span reads SGG. Aspartate 179 provides a ligand contact to Mg(2+). Threonine 182 contacts O-phospho-L-serine. Phosphate is bound at residue threonine 182.

The protein belongs to the HAD-like hydrolase superfamily. SerB family. In terms of assembly, homodimer. It depends on Mg(2+) as a cofactor.

The protein resides in the cytoplasm. It localises to the cytosol. The enzyme catalyses O-phospho-L-serine + H2O = L-serine + phosphate. It catalyses the reaction O-phospho-D-serine + H2O = D-serine + phosphate. It participates in amino-acid biosynthesis; L-serine biosynthesis; L-serine from 3-phospho-D-glycerate: step 3/3. Its function is as follows. Catalyzes the last irreversible step in the biosynthesis of L-serine from carbohydrates, the dephosphorylation of O-phospho-L-serine to L-serine. L-serine can then be used in protein synthesis, to produce other amino acids, in nucleotide metabolism or in glutathione synthesis, or can be racemized to D-serine, a neuromodulator. May also act on O-phospho-D-serine. The sequence is that of Phosphoserine phosphatase from Rattus norvegicus (Rat).